The primary structure comprises 734 residues: Translation initiation factor IF-2 (734 aa).

The segment at Ser-39–Glu-110 is disordered. Over residues Asp-82–Glu-110 the composition is skewed to basic and acidic residues. The tr-type G domain maps to Asn-238–Asp-405. Residues Gly-247–Thr-254 form a G1 region. A GTP-binding site is contributed by Gly-247–Thr-254. Residues Gly-272–His-276 form a G2 region. A G3 region spans residues Asp-293–Gly-296. Residues Asp-293–His-297 and Asn-347–Asp-350 each bind GTP. Positions Asn-347–Asp-350 are G4. The G5 stretch occupies residues Ser-383–Lys-385.

The protein belongs to the TRAFAC class translation factor GTPase superfamily. Classic translation factor GTPase family. IF-2 subfamily.

The protein localises to the cytoplasm. In terms of biological role, one of the essential components for the initiation of protein synthesis. Protects formylmethionyl-tRNA from spontaneous hydrolysis and promotes its binding to the 30S ribosomal subunits. Also involved in the hydrolysis of GTP during the formation of the 70S ribosomal complex. The protein is Translation initiation factor IF-2 of Pelagibacter ubique (strain HTCC1062).